Reading from the N-terminus, the 134-residue chain is MTRDQNGTWEMESNDNFEGYMKALDIDFATRKIAVALTQTKIIEQDGDKFKTKTNSTFRNYDLDFTVGVEFDEYTKGLDNRNVKTLIIWEGDALVCVQKGEKENRGWKQWVEGDKLYLELTCGDQVCRQVFKKK.

Residues K41 and Q109 each contribute to the all-trans-retinol site.

It belongs to the calycin superfamily. Fatty-acid binding protein (FABP) family.

Its subcellular location is the cytoplasm. Its function is as follows. Intracellular transport of retinol. The protein is Retinol-binding protein 2 (RBP2) of Sus scrofa (Pig).